A 270-amino-acid polypeptide reads, in one-letter code: Bark lectin (270 aa).

The first 15 residues, 1 to 15, serve as a signal peptide directing secretion; the sequence is ISITFFLLLLNKVNS. Residues N60, N76, and N127 are each glycosylated (N-linked (GlcNAc...) asparagine). E141 and D143 together coordinate Mn(2+). Ca(2+) is bound by residues D143, H145, N147, and D150. Residues D150 and H155 each coordinate Mn(2+). Residue N201 is glycosylated (N-linked (GlcNAc...) asparagine).

This sequence belongs to the leguminous lectin family.

In terms of biological role, galNAc-specific lectin. The sequence is that of Bark lectin from Styphnolobium japonicum (Japanese pagoda tree).